The chain runs to 209 residues: Thymidylate kinase (209 aa).

An ATP-binding site is contributed by 10–17 (GIDGCGKS).

The protein belongs to the thymidylate kinase family.

It catalyses the reaction dTMP + ATP = dTDP + ADP. Its function is as follows. Phosphorylation of dTMP to form dTDP in both de novo and salvage pathways of dTTP synthesis. The protein is Thymidylate kinase of Parasynechococcus marenigrum (strain WH8102).